We begin with the raw amino-acid sequence, 469 residues long: Ribulose bisphosphate carboxylase large chain (469 aa).

Lysine 5 carries the N6,N6,N6-trimethyllysine modification. Residues asparagine 114 and threonine 164 each coordinate substrate. Lysine 166 (proton acceptor) is an active-site residue. Substrate is bound at residue lysine 168. Mg(2+)-binding residues include lysine 192, aspartate 194, and glutamate 195. Lysine 192 is modified (N6-carboxylysine). Residue histidine 285 is the Proton acceptor of the active site. Residues arginine 286, histidine 318, and serine 370 each coordinate substrate.

Belongs to the RuBisCO large chain family. Type I subfamily. In terms of assembly, heterohexadecamer of 8 large chains and 8 small chains; disulfide-linked. The disulfide link is formed within the large subunit homodimers. Mg(2+) is required as a cofactor. The disulfide bond which can form in the large chain dimeric partners within the hexadecamer appears to be associated with oxidative stress and protein turnover.

Its subcellular location is the plastid. The protein resides in the chloroplast. It carries out the reaction 2 (2R)-3-phosphoglycerate + 2 H(+) = D-ribulose 1,5-bisphosphate + CO2 + H2O. The enzyme catalyses D-ribulose 1,5-bisphosphate + O2 = 2-phosphoglycolate + (2R)-3-phosphoglycerate + 2 H(+). RuBisCO catalyzes two reactions: the carboxylation of D-ribulose 1,5-bisphosphate, the primary event in carbon dioxide fixation, as well as the oxidative fragmentation of the pentose substrate in the photorespiration process. Both reactions occur simultaneously and in competition at the same active site. This is Ribulose bisphosphate carboxylase large chain from Nicandra physalodes (Apple-of-Peru).